Reading from the N-terminus, the 63-residue chain is Large ribosomal subunit protein bL28 (63 aa).

This sequence belongs to the bacterial ribosomal protein bL28 family.

This is Large ribosomal subunit protein bL28 from Kosmotoga olearia (strain ATCC BAA-1733 / DSM 21960 / TBF 19.5.1).